The following is a 307-amino-acid chain: Protoheme IX farnesyltransferase (307 aa).

9 helical membrane passes run 28–48 (VTQLAVFCAVIGMFLATPGMV), 50–70 (WPVLIGGAVGIWLFAGAAFAI), 100–120 (ILLFSLVLGGAGMWTLHVFAN), 122–142 (LTMWLTFATFIGYAIIYTLLL), 149–169 (NIVIGGLSGAMPPALGWAAVA), 176–196 (AWILVLIIFTWTPPHFWALAL), 218–238 (FTLLHILLYTLIMVAATILPF), 243–263 (SGYLYLAVALVLGFGFLVHAW), and 282–302 (IVYLSLLFAALLIDHYFKFGP).

Belongs to the UbiA prenyltransferase family. Protoheme IX farnesyltransferase subfamily.

It is found in the cell inner membrane. The catalysed reaction is heme b + (2E,6E)-farnesyl diphosphate + H2O = Fe(II)-heme o + diphosphate. Its pathway is porphyrin-containing compound metabolism; heme O biosynthesis; heme O from protoheme: step 1/1. Its function is as follows. Converts heme B (protoheme IX) to heme O by substitution of the vinyl group on carbon 2 of heme B porphyrin ring with a hydroxyethyl farnesyl side group. This Ralstonia nicotianae (strain ATCC BAA-1114 / GMI1000) (Ralstonia solanacearum) protein is Protoheme IX farnesyltransferase.